We begin with the raw amino-acid sequence, 43 residues long: Venom protein E2 (43 aa).

Cystine bridges form between C3–C20 and C14–C39.

Expressed by the venom gland.

It localises to the secreted. In terms of biological role, neurotoxin. Blocks muscular nicotinic acetylcholine receptors (nAChR). This is Venom protein E2 from Micrurus pyrrhocryptus (Coral snake).